The primary structure comprises 345 residues: Isopentenyl-diphosphate delta-isomerase (345 aa).

6-7 serves as a coordination point for substrate; that stretch reads RK. Residues 63 to 65, Ser93, and Asn122 contribute to the FMN site; that span reads SMT. A substrate-binding site is contributed by 93-95; that stretch reads SQR. Substrate is bound at residue Gln156. Glu157 contributes to the Mg(2+) binding site. FMN is bound by residues Lys188, Thr218, 265–267, and 286–287; these read GLR and AL.

It belongs to the IPP isomerase type 2 family. Homooctamer. Dimer of tetramers. FMN serves as cofactor. The cofactor is NADPH. It depends on Mg(2+) as a cofactor.

The protein localises to the cytoplasm. It catalyses the reaction isopentenyl diphosphate = dimethylallyl diphosphate. Its function is as follows. Involved in the biosynthesis of isoprenoids. Catalyzes the 1,3-allylic rearrangement of the homoallylic substrate isopentenyl (IPP) to its allylic isomer, dimethylallyl diphosphate (DMAPP). This is Isopentenyl-diphosphate delta-isomerase from Archaeoglobus fulgidus (strain ATCC 49558 / DSM 4304 / JCM 9628 / NBRC 100126 / VC-16).